An 827-amino-acid polypeptide reads, in one-letter code: SH3-containing GRB2-like protein 3-interacting protein 1 (827 aa).

Disordered stretches follow at residues 1 to 116 (MMEG…SHKK), 143 to 199 (IGNI…ALAP), and 223 to 278 (IWGS…QAAT). Basic and acidic residues-rich tracts occupy residues 16–32 (RKKEKDTDSTGSPDRDG) and 40–53 (LPYHSKAECAREGG). Serine 78, serine 104, serine 105, serine 107, serine 149, serine 151, serine 156, and serine 169 each carry phosphoserine. Phosphothreonine is present on residues threonine 180 and threonine 182. Position 236 is a phosphoserine (serine 236). Residues 245-260 (TGTPPPLPPKTVPATP) are compositionally biased toward pro residues. Phosphothreonine occurs at positions 247 and 259. Phosphoserine occurs at positions 265, 287, 289, 300, 316, and 319. Polar residues predominate over residues 265–276 (SPLTVATGNDQA). Residues 315-505 (FSDASPEHVT…IAPLARAEST (191 aa)) are disordered. Residues 319 to 333 (SPEHVTPELTPREKV) are compositionally biased toward basic and acidic residues. A phosphothreonine mark is found at threonine 324, threonine 328, and threonine 335. Over residues 335–345 (TPPAASDIPAD) the composition is skewed to low complexity. Over residues 346–369 (SPTPGPPGPPGSAGPPGPPGPRNV) the composition is skewed to pro residues. Phosphoserine is present on serine 371. Residues 377-392 (EVQKKVAEQTFIKDDY) are compositionally biased toward basic and acidic residues. Residue serine 398 is modified to Phosphoserine. Phosphothreonine is present on threonine 409. The segment covering 436 to 455 (ASGASSPARPATPLVPCSCS) has biased composition (low complexity). Over residues 456 to 474 (TPPPPPPRPPSRPKLPPGK) the composition is skewed to pro residues. Residues 481–491 (SRPFSPPIHSS) are compositionally biased toward low complexity. At serine 485 the chain carries Phosphoserine. The 269-residue stretch at 558-826 (TLPVAAAFTE…RFAAGKYLAD (269 aa)) folds into the MHD domain. Interaction with DPF motifs-containing proteins regions lie at residues 560-566 (PVAAAFT), 592-594 (SFP), 666-669 (TYYN), and 812-817 (SLIKKR). Residues 648–827 (MPNLMTHLKK…FAAGKYLADN (180 aa)) are necessary and sufficient to mediate interaction with CANX.

As to quaternary structure, interacts with proteins essential or regulating the formation of functional clathrin-coated pits. Interacts with CANX. Interacts with AP2A1. Interacts with EPS15. Interacts with SH3GL3. Interacts with AMPH. Interacts with ITSN1 (via SH3 domains). Interacts with and REPS1. Specifically expressed in brain. Also detected at lower levels in spleen and adipose tissue.

Its subcellular location is the membrane. The protein localises to the clathrin-coated pit. May function in clathrin-mediated endocytosis. Has both a membrane binding/tubulating activity and the ability to recruit proteins essential to the formation of functional clathrin-coated pits. Has a preference for membranes enriched in phosphatidylserine and phosphoinositides and is required for the endocytosis of the transferrin receptor. May also bind tubulin. May play a role in the regulation of energy homeostasis. The chain is SH3-containing GRB2-like protein 3-interacting protein 1 (SGIP1) from Psammomys obesus (Fat sand rat).